The primary structure comprises 368 residues: WAT1-related protein At5g40240 (368 aa).

10 helical membrane passes run 18–38 (VVPF…NTLF), 50–70 (VFVF…SVIF), 82–102 (PLFF…IAGC), 111–131 (TLAS…AVIF), 142–162 (ATQA…VVVL), 194–214 (WIIG…WYIL), 226–246 (ITVV…VCLF), 260–280 (ISLA…ALTH), 292–312 (ISLF…IFLG), and 315–335 (LHLG…TVIW). EamA domains are found at residues 33–161 (GSNT…LVVV) and 208–334 (ISVW…YTVI).

Belongs to the drug/metabolite transporter (DMT) superfamily. Plant drug/metabolite exporter (P-DME) (TC 2.A.7.4) family.

The protein resides in the membrane. This Arabidopsis thaliana (Mouse-ear cress) protein is WAT1-related protein At5g40240.